The primary structure comprises 739 residues: Ent-kaurene synthase-like 3 (739 aa).

Asp-475, Asp-479, Asn-619, Thr-623, and Glu-627 together coordinate Mg(2+). A DDXXD motif motif is present at residues 475–479 (DDFFD).

The protein belongs to the terpene synthase family. It depends on Mg(2+) as a cofactor. Expressed in roots and stems.

The sequence is that of Ent-kaurene synthase-like 3 (KSL3) from Oryza sativa subsp. japonica (Rice).